Consider the following 277-residue polypeptide: Undecaprenyl-diphosphatase (277 aa).

6 helical membrane-spanning segments follow: residues 47–67, 85–105, 108–128, 187–207, 218–238, and 249–269; these read FNII…RGKI, ANLL…ADLI, WLFN…VMLW, FSFF…GYVY, VFAV…RALL, and FAWY…FHLI.

Belongs to the UppP family.

It localises to the cell inner membrane. The catalysed reaction is di-trans,octa-cis-undecaprenyl diphosphate + H2O = di-trans,octa-cis-undecaprenyl phosphate + phosphate + H(+). Catalyzes the dephosphorylation of undecaprenyl diphosphate (UPP). Confers resistance to bacitracin. This Pseudomonas aeruginosa (strain ATCC 15692 / DSM 22644 / CIP 104116 / JCM 14847 / LMG 12228 / 1C / PRS 101 / PAO1) protein is Undecaprenyl-diphosphatase.